Consider the following 377-residue polypeptide: Mitogen-activated protein kinase mpkC (377 aa).

The 280-residue stretch at Tyr20–Leu299 folds into the Protein kinase domain. ATP contacts are provided by residues Ile26–Val34 and Lys49. The Proton acceptor role is filled by Asp141. Thr171 is modified (phosphothreonine). The TXY signature appears at Thr171–Tyr173. Tyr173 is modified (phosphotyrosine).

The protein belongs to the protein kinase superfamily. Ser/Thr protein kinase family. MAP kinase subfamily. HOG1 sub-subfamily. Mg(2+) serves as cofactor. Post-translationally, dually phosphorylated on Thr-171 and Tyr-173, which activates the enzyme.

The catalysed reaction is L-seryl-[protein] + ATP = O-phospho-L-seryl-[protein] + ADP + H(+). It carries out the reaction L-threonyl-[protein] + ATP = O-phospho-L-threonyl-[protein] + ADP + H(+). Activated by tyrosine and threonine phosphorylation. Functionally, mitogen-activated protein kinase required for growth on media where sorbitol or mannitol is the sole carbon source. The sequence is that of Mitogen-activated protein kinase mpkC (mpkc) from Neosartorya fischeri (strain ATCC 1020 / DSM 3700 / CBS 544.65 / FGSC A1164 / JCM 1740 / NRRL 181 / WB 181) (Aspergillus fischerianus).